The primary structure comprises 220 residues: Competence protein ComFC (220 aa).

It belongs to the ComF/GntX family. As to quaternary structure, monomer and dimer in solution. Interacts with ComFA and DprA; ComFA-ComFC form rings about 150 Angstroms in diameter with apparent 6-fold symmetry.

Its function is as follows. Involved in transformation (genetic competence for DNA uptake). The polypeptide is Competence protein ComFC (Streptococcus pneumoniae (strain ATCC BAA-255 / R6)).